The chain runs to 749 residues: cGMP-dependent protein kinase egl-4 (749 aa).

Residues 30–96 are a coiled coil; sequence EAHELQKLIP…LEQKAQSAAS (67 aa). Residues 87–111 are disordered; it reads LEQKAQSAASPGQPPSPSPRTDQLG. 3',5'-cyclic GMP contacts are provided by residues 234-237, 244-245, Arg349, 358-361, 368-369, and Tyr403; these read GELA, RT, and GERA. In terms of domain architecture, Protein kinase spans 438–698; the sequence is VKRLATLGVG…VNDIRKHRWF (261 aa). ATP-binding positions include 444 to 452 and Lys468; that span reads LGVGGFGRV. The Nuclear localization signal signature appears at 461–473; the sequence is KSKTYALKALKKK. The active-site Proton acceptor is Asp562. The 51-residue stretch at 699-749 folds into the AGC-kinase C-terminal domain; that stretch reads MGFDWEGLRTKTLKPPILPKVNNPADVTNFDNYPPDNDVPPDEFSGWDEGF. The disordered stretch occupies residues 723–749; sequence ADVTNFDNYPPDNDVPPDEFSGWDEGF.

Belongs to the protein kinase superfamily. AGC Ser/Thr protein kinase family. cGMP subfamily. Mg(2+) serves as cofactor. In terms of processing, autophosphorylated.

The protein resides in the cytoplasm. It localises to the nucleus. The enzyme catalyses L-seryl-[protein] + ATP = O-phospho-L-seryl-[protein] + ADP + H(+). It catalyses the reaction L-threonyl-[protein] + ATP = O-phospho-L-threonyl-[protein] + ADP + H(+). Binding of cGMP results in enzyme activation. In terms of biological role, promotes chemoreceptor gene expression in response to increased cGMP levels by antagonizing the gene repression functions of the class II HDAC hda-4 and the mef-2 transcription factor. Regulates gene expression via recruitment of a histone deacetylase complex containing hda-2, saeg-1 and saeg-2. Represses body size and lifespan through the dbl-1 and insulin pathways, respectively. May also signal through daf-3 and/or daf-5. Role in egg-laying, dauer formation and motility. Regulates behavioral responses to various chemosensory stimuli in sensory neurons. Required for the initiation of long term adaptation to prolonged odor exposure which results in a decrease in odor seeking behavior. May regulate this process by phosphorylating tax-2, a subunit of cyclic nucleotide-gated channel tax-2/tax-4. In ASH sensory neurons, negatively regulates avoidance behavior to some bitter tastants, such as quinine, probably by phosphorylating rgs-2 and rgs-3 which are 2 regulator of G-protein signaling proteins. In AWB sensory neurons, involved in avoidance behavior to some repellent odors. In ASE left (ASEL) sensory neuron, involved in the sensing of environmental alkalinity downstream of receptor-type guanylate cyclase gcy-14. In sensory neurons, involved in the signaling pathway downstream of insulin, TGF-beta and receptor-type guanylate cyclase responsible for inducing quiescence after food intake. Might play a role in aversive olfactory learning in AWC neurons when an odor is associated with food deprivation, depending on the ins-1/age-1 signal from the AIA to the AWC neurons. Probably by regulating neuronal transmission downstream of lin-3 and receptor lin-23 and phospholipase plc-3 in ALA neurons, involved in the decrease in locomotion during the quiescent state that precedes each larval molt. This is cGMP-dependent protein kinase egl-4 from Caenorhabditis briggsae.